Here is a 258-residue protein sequence, read N- to C-terminus: Imidazole glycerol phosphate synthase subunit HisF (258 aa).

Residues Asp-11 and Asp-130 contribute to the active site.

Belongs to the HisA/HisF family. As to quaternary structure, heterodimer of HisH and HisF.

It is found in the cytoplasm. It catalyses the reaction 5-[(5-phospho-1-deoxy-D-ribulos-1-ylimino)methylamino]-1-(5-phospho-beta-D-ribosyl)imidazole-4-carboxamide + L-glutamine = D-erythro-1-(imidazol-4-yl)glycerol 3-phosphate + 5-amino-1-(5-phospho-beta-D-ribosyl)imidazole-4-carboxamide + L-glutamate + H(+). The protein operates within amino-acid biosynthesis; L-histidine biosynthesis; L-histidine from 5-phospho-alpha-D-ribose 1-diphosphate: step 5/9. Its function is as follows. IGPS catalyzes the conversion of PRFAR and glutamine to IGP, AICAR and glutamate. The HisF subunit catalyzes the cyclization activity that produces IGP and AICAR from PRFAR using the ammonia provided by the HisH subunit. This chain is Imidazole glycerol phosphate synthase subunit HisF, found in Escherichia coli O127:H6 (strain E2348/69 / EPEC).